We begin with the raw amino-acid sequence, 276 residues long: Protein PXR1 (276 aa).

Residues 1 to 23 (MGLAGTKIKQRFGNDPRNTNWSN) are disordered. The region spanning 25 to 71 (TSRFGHQYLAKMGWQQGSGLGLVSHALTTHVKVSIKDDNLGLGAKLH) is the G-patch domain. A compositionally biased stretch (basic and acidic residues) spans 152–172 (DDGKKSRKRKADESETKEDKK). Residues 152–261 (DDGKKSRKRK…SKWIKQKRAS (110 aa)) form a disordered region. Over residues 173–218 (TLKKHKKEKKDKKEKKEKKKKKEKKDKKDKKDKKNKKDKKDKKDKK) the composition is skewed to basic residues. A compositionally biased stretch (basic and acidic residues) spans 219-228 (DKKDKIRTGS). Residues 229-239 (DETLVSKESSA) are compositionally biased toward polar residues.

The protein belongs to the PINX1 family.

Its subcellular location is the nucleus. It is found in the nucleolus. Involved in rRNA-processing at A0, A1 and A2 sites and negatively regulates telomerase. This chain is Protein PXR1 (PXR1), found in Candida albicans (strain SC5314 / ATCC MYA-2876) (Yeast).